The following is a 1044-amino-acid chain: Protein ITPRID1 (1044 aa).

Over residues 1–14 (MMAQKSQGSDNLQE) the composition is skewed to polar residues. Disordered regions lie at residues 1–20 (MMAQ…EKSK), 230–251 (EEKA…EHRR), 388–489 (MEEV…SSQE), and 583–607 (PEGA…HTQD). The segment covering 388–398 (MEEVQSFEEET) has biased composition (acidic residues). Polar residues-rich tracts occupy residues 460 to 469 (HSLVSSQDCQ) and 480 to 489 (RASMSFSSQE). A coiled-coil region spans residues 896–937 (SRDMSEEEREEAEQLQTLREALRQQVAELEFQLGDRAQQIRE).

In Homo sapiens (Human), this protein is Protein ITPRID1.